We begin with the raw amino-acid sequence, 134 residues long: Putative integral membrane protein YxzK (134 aa).

4 helical membrane-spanning segments follow: residues 3–23 (VIRI…GEAI), 35–55 (IVGL…VSII), 58–78 (GAGF…TGVI), and 89–109 (LMLL…AGFA).

It is found in the cell membrane. The protein is Putative integral membrane protein YxzK (yxzK) of Bacillus subtilis (strain 168).